A 281-amino-acid polypeptide reads, in one-letter code: Large ribosomal subunit protein uL2 (281 aa).

Residues 208–281 (AGRSRYAGQR…RGRKRGPHTR (74 aa)) form a disordered region. Over residues 254–281 (TVGKKTRSHKARSNKFIVRGRKRGPHTR) the composition is skewed to basic residues.

It belongs to the universal ribosomal protein uL2 family. As to quaternary structure, part of the 50S ribosomal subunit. Forms a bridge to the 30S subunit in the 70S ribosome.

In terms of biological role, one of the primary rRNA binding proteins. Required for association of the 30S and 50S subunits to form the 70S ribosome, for tRNA binding and peptide bond formation. It has been suggested to have peptidyltransferase activity; this is somewhat controversial. Makes several contacts with the 16S rRNA in the 70S ribosome. The polypeptide is Large ribosomal subunit protein uL2 (Limosilactobacillus fermentum (strain NBRC 3956 / LMG 18251) (Lactobacillus fermentum)).